The following is a 225-amino-acid chain: Endo-1,4-beta-xylanase (225 aa).

Residues 1–31 form the signal peptide; sequence MVGFTPVALAALAATGALAFPAGNATELEKR. Glutamine 32 bears the Pyrrolidone carboxylic acid mark. Positions 32–222 constitute a GH11 domain; the sequence is QTTPNSEGWH…SSGYARITVA (191 aa). The active-site Nucleophile is glutamate 117. A disulfide bond links cysteine 141 and cysteine 185. Glutamate 209 (proton donor) is an active-site residue.

It catalyses the reaction Endohydrolysis of (1-&gt;4)-beta-D-xylosidic linkages in xylans.. It functions in the pathway glycan degradation; xylan degradation. This Thermomyces lanuginosus (Humicola lanuginosa) protein is Endo-1,4-beta-xylanase (XYNA).